A 351-amino-acid polypeptide reads, in one-letter code: Methylthioribose-1-phosphate isomerase (351 aa).

Substrate contacts are provided by residues 53–55 (RGA), Arg96, and Gln205. Asp246 serves as the catalytic Proton donor. Substrate is bound at residue 256–257 (NK).

It belongs to the eIF-2B alpha/beta/delta subunits family. MtnA subfamily.

It catalyses the reaction 5-(methylsulfanyl)-alpha-D-ribose 1-phosphate = 5-(methylsulfanyl)-D-ribulose 1-phosphate. The protein operates within amino-acid biosynthesis; L-methionine biosynthesis via salvage pathway; L-methionine from S-methyl-5-thio-alpha-D-ribose 1-phosphate: step 1/6. Catalyzes the interconversion of methylthioribose-1-phosphate (MTR-1-P) into methylthioribulose-1-phosphate (MTRu-1-P). This chain is Methylthioribose-1-phosphate isomerase, found in Synechocystis sp. (strain ATCC 27184 / PCC 6803 / Kazusa).